We begin with the raw amino-acid sequence, 587 residues long: UDP-N-acetylmuramoylalanine--D-glutamate ligase (587 aa).

Residues 124-147 are disordered; the sequence is DHLVPPESPLSDASDISDASDATD. Residues 132–147 show a composition bias toward low complexity; that stretch reads PLSDASDISDASDATD. ATP is bound at residue 214–220; that stretch reads GTNGKTT.

Belongs to the MurCDEF family.

Its subcellular location is the cytoplasm. The catalysed reaction is UDP-N-acetyl-alpha-D-muramoyl-L-alanine + D-glutamate + ATP = UDP-N-acetyl-alpha-D-muramoyl-L-alanyl-D-glutamate + ADP + phosphate + H(+). It participates in cell wall biogenesis; peptidoglycan biosynthesis. In terms of biological role, cell wall formation. Catalyzes the addition of glutamate to the nucleotide precursor UDP-N-acetylmuramoyl-L-alanine (UMA). This chain is UDP-N-acetylmuramoylalanine--D-glutamate ligase, found in Polaromonas sp. (strain JS666 / ATCC BAA-500).